A 345-amino-acid chain; its full sequence is Phosphoribosylformylglycinamidine cyclo-ligase (345 aa).

It belongs to the AIR synthase family.

It localises to the cytoplasm. It catalyses the reaction 2-formamido-N(1)-(5-O-phospho-beta-D-ribosyl)acetamidine + ATP = 5-amino-1-(5-phospho-beta-D-ribosyl)imidazole + ADP + phosphate + H(+). It participates in purine metabolism; IMP biosynthesis via de novo pathway; 5-amino-1-(5-phospho-D-ribosyl)imidazole from N(2)-formyl-N(1)-(5-phospho-D-ribosyl)glycinamide: step 2/2. The chain is Phosphoribosylformylglycinamidine cyclo-ligase from Sodalis glossinidius (strain morsitans).